The sequence spans 189 residues: Cell division protein SepF (189 aa).

The interval 25-70 (ESRVQQQAVKPSNSRPAQQEPVRDIKQPRLVSSSSQHVTNTPSSNE) is disordered. 2 stretches are compositionally biased toward polar residues: residues 27 to 41 (RVQQ…SRPA) and 54 to 70 (LVSS…SSNE).

It belongs to the SepF family. As to quaternary structure, homodimer. Interacts with FtsZ.

Its subcellular location is the cytoplasm. Its function is as follows. Cell division protein that is part of the divisome complex and is recruited early to the Z-ring. Probably stimulates Z-ring formation, perhaps through the cross-linking of FtsZ protofilaments. Its function overlaps with FtsA. This is Cell division protein SepF from Streptococcus gordonii (strain Challis / ATCC 35105 / BCRC 15272 / CH1 / DL1 / V288).